The sequence spans 279 residues: Diaminopimelate epimerase (279 aa).

Substrate-binding residues include Asn11 and Asn63. Cys72 serves as the catalytic Proton donor. Substrate contacts are provided by residues 73–74 (GN), Asn161, Asn194, and 212–213 (ER). The active-site Proton acceptor is the Cys221. Residue 222–223 (GT) participates in substrate binding.

The protein belongs to the diaminopimelate epimerase family. As to quaternary structure, homodimer.

Its subcellular location is the cytoplasm. It catalyses the reaction (2S,6S)-2,6-diaminopimelate = meso-2,6-diaminopimelate. The protein operates within amino-acid biosynthesis; L-lysine biosynthesis via DAP pathway; DL-2,6-diaminopimelate from LL-2,6-diaminopimelate: step 1/1. In terms of biological role, catalyzes the stereoinversion of LL-2,6-diaminopimelate (L,L-DAP) to meso-diaminopimelate (meso-DAP), a precursor of L-lysine and an essential component of the bacterial peptidoglycan. This Moorella thermoacetica (strain ATCC 39073 / JCM 9320) protein is Diaminopimelate epimerase.